Reading from the N-terminus, the 238-residue chain is Type III secretion protein hrcQa (238 aa).

Residues 66 to 238 (DAEALLSLLG…SHEEHSHHEY (173 aa)) are hrcQa-C.

In terms of assembly, interacts with hrcQb.

The protein resides in the cell inner membrane. Component of the type III secretion system, which is required for effector protein delivery, parasitism, and pathogenicity. Probably participates in the formation of a C-ring-like assembly along with hrcQb. The protein is Type III secretion protein hrcQa (hrcQa) of Pseudomonas syringae pv. syringae.